A 265-amino-acid polypeptide reads, in one-letter code: uncharacterized protein (265 aa).

Thiamine diphosphate is bound at residue glutamate 47. Positions 204 to 247 (QHQMWLVQHILRVARHCGFTVTTMEMTLIETQVRLKITVKSDRT) are thiamine pyrophosphate binding.

It belongs to the TPP enzyme family. It depends on Mg(2+) as a cofactor. The cofactor is thiamine diphosphate.

In terms of biological role, truncated acetolactase synthase; no longer catalytically active. This is an uncharacterized protein from Haemophilus influenzae (strain ATCC 51907 / DSM 11121 / KW20 / Rd).